Reading from the N-terminus, the 871-residue chain is Probable receptor-like protein kinase At2g21480 (871 aa).

A signal peptide spans 1 to 39 (MEIRKKPNIPMCLVLDSSSRPFMTLLFTILLFLTGLASA). Residues 40–439 (VGAVGGSPTA…GQRASMGKQG (400 aa)) are Extracellular-facing. Residues asparagine 169, asparagine 182, asparagine 253, asparagine 316, and asparagine 381 are each glycosylated (N-linked (GlcNAc...) asparagine). The helical transmembrane segment at 440-460 (MVATAGFVMMFGAFVGLGAMV) threads the bilayer. Topologically, residues 461 to 871 (YKWKKRPQDW…FTQFASLNGR (411 aa)) are cytoplasmic. The 273-residue stretch at 525–797 (FDASEIIGVG…GDVLWNLEYA (273 aa)) folds into the Protein kinase domain. ATP contacts are provided by residues 531–539 (IGVGGFGNV) and lysine 553. Residue aspartate 649 is the Proton acceptor of the active site. Residues 808 to 871 (KAEAEEVETP…FTQFASLNGR (64 aa)) form a disordered region. Over residues 817–839 (PKPVAVPAAAPTSPAATTAAASE) the composition is skewed to low complexity. The span at 854–871 (DQHSGTTMFTQFASLNGR) shows a compositional bias: polar residues.

This sequence belongs to the protein kinase superfamily. Ser/Thr protein kinase family.

It localises to the membrane. The polypeptide is Probable receptor-like protein kinase At2g21480 (Arabidopsis thaliana (Mouse-ear cress)).